The primary structure comprises 383 residues: Homoserine O-succinyltransferase (383 aa).

Positions 51 to 360 (NAILLCHALS…EAEHGHDSFL (310 aa)) constitute an AB hydrolase-1 domain. Catalysis depends on serine 157, which acts as the Nucleophile. Arginine 227 is a binding site for substrate. Catalysis depends on residues aspartate 323 and histidine 356. Aspartate 357 provides a ligand contact to substrate.

This sequence belongs to the AB hydrolase superfamily. MetX family. As to quaternary structure, homodimer.

It localises to the cytoplasm. The catalysed reaction is L-homoserine + succinyl-CoA = O-succinyl-L-homoserine + CoA. It functions in the pathway amino-acid biosynthesis; L-methionine biosynthesis via de novo pathway; O-succinyl-L-homoserine from L-homoserine: step 1/1. Transfers a succinyl group from succinyl-CoA to L-homoserine, forming succinyl-L-homoserine. The polypeptide is Homoserine O-succinyltransferase (Acidithiobacillus ferrooxidans (strain ATCC 23270 / DSM 14882 / CIP 104768 / NCIMB 8455) (Ferrobacillus ferrooxidans (strain ATCC 23270))).